Consider the following 176-residue polypeptide: Ribosome maturation factor RimM (176 aa).

Residues 103 to 176 form the PRC barrel domain; that stretch reads QNDEYYFYEI…KIVVKELEWI (74 aa).

Belongs to the RimM family. In terms of assembly, binds ribosomal protein uS19.

Its subcellular location is the cytoplasm. Functionally, an accessory protein needed during the final step in the assembly of 30S ribosomal subunit, possibly for assembly of the head region. Essential for efficient processing of 16S rRNA. May be needed both before and after RbfA during the maturation of 16S rRNA. It has affinity for free ribosomal 30S subunits but not for 70S ribosomes. The polypeptide is Ribosome maturation factor RimM (Thermotoga neapolitana (strain ATCC 49049 / DSM 4359 / NBRC 107923 / NS-E)).